Reading from the N-terminus, the 178-residue chain is Oligoribonuclease (178 aa).

In terms of domain architecture, Exonuclease spans 7–168 (LIWIDLEMTG…DDIRESIAEL (162 aa)). Tyr-128 is an active-site residue.

It belongs to the oligoribonuclease family.

It localises to the cytoplasm. In terms of biological role, 3'-to-5' exoribonuclease specific for small oligoribonucleotides. This chain is Oligoribonuclease, found in Francisella tularensis subsp. holarctica (strain OSU18).